We begin with the raw amino-acid sequence, 298 residues long: ADP/ATP translocase 1 (298 aa).

The Mitochondrial intermembrane portion of the chain corresponds to 1 to 7; the sequence is MSDQALS. S2 is modified (N-acetylserine). Residues 6-98 form a Solcar 1 repeat; that stretch reads LSFLKDFLAG…FAFKDKYKQI (93 aa). Residue S7 is modified to Phosphoserine. Residues 8-37 traverse the membrane as a helical segment; it reads FLKDFLAGGVAAAVSKTAVAPIERVKLLLQ. Topologically, residues 38-74 are mitochondrial matrix; it reads VQHASKQISAEKQYKGIIDCVVRIPKEQGFLSFWRGN. Position 52 is an N6,N6,N6-trimethyllysine (K52). A helical membrane pass occupies residues 75-99; it reads LANVIRYFPTQALNFAFKDKYKQIF. Residues R80 and K92 each contribute to the ADP site. Residues 100–109 are Mitochondrial intermembrane-facing; the sequence is LGGVDRHKQF. Residues 110–130 form a helical membrane-spanning segment; the sequence is WRYFAGNLASGGAAGATSLCF. Solcar repeat units lie at residues 111-201 and 212-297; these read RYFA…AKGM and VSWM…IKKY. Topologically, residues 131 to 178 are mitochondrial matrix; it reads VYPLDFARTRLAADVGKGAAQREFSGLGNCLTKIFKSDGLRGLYQGFN. At K147 the chain carries N6-succinyllysine. C160 is subject to S-nitrosocysteine. A helical transmembrane segment spans residues 179-199; it reads VSVQGIIIYRAAYFGVYDTAK. At 200 to 210 the chain is on the mitochondrial intermembrane side; that stretch reads GMLPDPKNVHI. Residues 211–231 form a helical membrane-spanning segment; it reads IVSWMIAQTVTAVAGLVSYPF. Over 232 to 273 the chain is Mitochondrial matrix; it reads DTVRRRMMMQSGRKGADIMYTGTVDCWKKIAKDEGAKAFFKG. An ADP-binding site is contributed by R235. Residues 235–240 are important for transport activity; that stretch reads RRRMMM. A Nucleotide carrier signature motif motif is present at residues 235 to 240; the sequence is RRRMMM. An N6-succinyllysine mark is found at K245 and K272. The chain crosses the membrane as a helical span at residues 274–291; it reads AWSNVLRGMGGAFVLVLY. At 292-298 the chain is on the mitochondrial intermembrane side; the sequence is DEIKKYV.

The protein belongs to the mitochondrial carrier (TC 2.A.29) family. Monomer. Found in a complex with ARL2, ARL2BP and SLC25A4/ANT1. Interacts with ARL2BP. Interacts with TIMM44; leading to inhibit the presequence translocase TIMM23, thereby promoting stabilization of PINK1. Post-translationally, under cell death induction, transglutaminated by TGM2. Transglutamination leads to formation of covalent cross-links between a glutamine and the epsilon-amino group of a lysine residue, forming polymers.

Its subcellular location is the mitochondrion inner membrane. It is found in the membrane. The enzyme catalyses ADP(in) + ATP(out) = ADP(out) + ATP(in). It carries out the reaction H(+)(in) = H(+)(out). The matrix-open state (m-state) is inhibited by the membrane-permeable bongkrekic acid (BKA). The cytoplasmic-open state (c-state) is inhibited by the membrane-impermeable toxic inhibitor carboxyatractyloside (CATR). Proton transporter activity is inhibited by ADP:ATP antiporter activity. Functionally, ADP:ATP antiporter that mediates import of ADP into the mitochondrial matrix for ATP synthesis, and export of ATP out to fuel the cell. Cycles between the cytoplasmic-open state (c-state) and the matrix-open state (m-state): operates by the alternating access mechanism with a single substrate-binding site intermittently exposed to either the cytosolic (c-state) or matrix (m-state) side of the inner mitochondrial membrane. In addition to its ADP:ATP antiporter activity, also involved in mitochondrial uncoupling and mitochondrial permeability transition pore (mPTP) activity. Plays a role in mitochondrial uncoupling by acting as a proton transporter: proton transport uncouples the proton flows via the electron transport chain and ATP synthase to reduce the efficiency of ATP production and cause mitochondrial thermogenesis. Proton transporter activity is inhibited by ADP:ATP antiporter activity, suggesting that SLC25A4/ANT1 acts as a master regulator of mitochondrial energy output by maintaining a delicate balance between ATP production (ADP:ATP antiporter activity) and thermogenesis (proton transporter activity). Proton transporter activity requires free fatty acids as cofactor, but does not transport it. Probably mediates mitochondrial uncoupling in tissues that do not express UCP1. Also plays a key role in mPTP opening, a non-specific pore that enables free passage of the mitochondrial membranes to solutes of up to 1.5 kDa, and which contributes to cell death. It is however unclear if SLC25A4/ANT1 constitutes a pore-forming component of mPTP or regulates it. Acts as a regulator of mitophagy independently of ADP:ATP antiporter activity: promotes mitophagy via interaction with TIMM44, leading to inhibit the presequence translocase TIMM23, thereby promoting stabilization of PINK1. The chain is ADP/ATP translocase 1 from Oryctolagus cuniculus (Rabbit).